The sequence spans 541 residues: Malate synthase (541 aa).

Arginine 172 acts as the Proton acceptor in catalysis. Aspartate 452 acts as the Proton donor in catalysis.

Belongs to the malate synthase family.

The protein resides in the cytoplasm. The catalysed reaction is glyoxylate + acetyl-CoA + H2O = (S)-malate + CoA + H(+). It participates in carbohydrate metabolism; glyoxylate cycle; (S)-malate from isocitrate: step 2/2. The chain is Malate synthase (mls) from Myxococcus xanthus (strain DK1622).